Here is a 165-residue protein sequence, read N- to C-terminus: Small ribosomal subunit protein uS5 (165 aa).

In terms of domain architecture, S5 DRBM spans 10–73 (LKEKVVHINR…EDAKKNIVEV (64 aa)).

This sequence belongs to the universal ribosomal protein uS5 family. Part of the 30S ribosomal subunit. Contacts proteins S4 and S8.

Functionally, with S4 and S12 plays an important role in translational accuracy. Its function is as follows. Located at the back of the 30S subunit body where it stabilizes the conformation of the head with respect to the body. The sequence is that of Small ribosomal subunit protein uS5 from Clostridium botulinum (strain ATCC 19397 / Type A).